The following is a 528-amino-acid chain: Phosphoenolpyruvate carboxykinase (ATP) (528 aa).

3 residues coordinate substrate: R56, Y192, and K198. ATP is bound by residues K198, H217, and 233–241 (GLSGTGKTT). Residues K198 and H217 each coordinate Mn(2+). D254 is a binding site for Mn(2+). E282, R319, and T444 together coordinate ATP. Substrate is bound at residue R319.

It belongs to the phosphoenolpyruvate carboxykinase (ATP) family. It depends on Mn(2+) as a cofactor.

Its subcellular location is the cytoplasm. The enzyme catalyses oxaloacetate + ATP = phosphoenolpyruvate + ADP + CO2. The protein operates within carbohydrate biosynthesis; gluconeogenesis. Involved in the gluconeogenesis. Catalyzes the conversion of oxaloacetate (OAA) to phosphoenolpyruvate (PEP) through direct phosphoryl transfer between the nucleoside triphosphate and OAA. The chain is Phosphoenolpyruvate carboxykinase (ATP) from Lysinibacillus sphaericus (strain C3-41).